The sequence spans 460 residues: Orexin receptor type 2 (460 aa).

Residues 1 to 54 (MSSTKLEDSLPRRNWSSASELNETQEPFLNPTDYDDEEFLRYLWREYLHPKEYE) lie on the Extracellular side of the membrane. Residues asparagine 14 and asparagine 22 are each glycosylated (N-linked (GlcNAc...) asparagine). Residues 33-49 (DYDDEEFLRYLWREYLH) are required for response to orexin-A. The helical transmembrane segment at 55–75 (WVLIAGYIIVFVVALIGNVLV) threads the bilayer. Residues 76-88 (CVAVWKNHHMRTV) lie on the Cytoplasmic side of the membrane. The chain crosses the membrane as a helical span at residues 89–110 (TNYFIVNLSLADVLVTITCLPA). Residues 111–127 (TLVVDITETWFFGQSLC) are Extracellular-facing. Cysteine 127 and cysteine 210 are joined by a disulfide. Residues 128-150 (KVIPYLQTVSVSVSVLTLSCIAL) traverse the membrane as a helical segment. Over 151–170 (DRWYAICHPLMFKSTAKRAR) the chain is Cytoplasmic. The chain crosses the membrane as a helical span at residues 171-191 (NSIVVIWIVSCIIMIPQAIVM). Residues 192 to 222 (ERSSMLPGLANKTTLFTVCDERWGGEVYPKM) lie on the Extracellular side of the membrane. Asparagine 202 carries an N-linked (GlcNAc...) asparagine glycan. The chain crosses the membrane as a helical span at residues 223–243 (YHICFFLVTYMAPLCLMVLAY). Residues 244 to 304 (LQIFRKLWCR…QIRARRKTAR (61 aa)) are Cytoplasmic-facing. Residues 305–326 (MLMVVLLVFAICYLPISILNVL) traverse the membrane as a helical segment. Topologically, residues 327–342 (KRVFGMFTHTEDRETV) are extracellular. A helical membrane pass occupies residues 343–366 (YAWFTFSHWLVYANSAANPIIYNF). At 367 to 460 (LSGKFREEFK…SSLLSTWLEV (94 aa)) the chain is on the cytoplasmic side.

Belongs to the G-protein coupled receptor 1 family. As to expression, expressed in the brain in the cerebral cortex, septal nuclei, hippocampus, medial thalamic groups, dorsal and median raphe nuclei, and many hypothalamic nuclei including the tuberomammillary nucleus, dorsomedial hypothalamus, paraventricular hypothalamic nucleus, and ventral premammillary nucleus. Not detected in the spleen, lung, liver, skeletal muscle, kidney and testis. Orexin receptor mRNA expression has also been reported in the adrenal gland, enteric nervous system, and pancreas.

Its subcellular location is the cell membrane. Functionally, nonselective, high-affinity receptor for both orexin-A and orexin-B neuropeptides. Triggers an increase in cytoplasmic Ca(2+) levels in response to orexin-A binding. This is Orexin receptor type 2 (Hcrtr2) from Rattus norvegicus (Rat).